The primary structure comprises 235 residues: Histidine/lysine/arginine/ornithine transport system permease protein HisM (235 aa).

Residues 1–26 are Periplasmic-facing; that stretch reads MIEIIQEYWKSLLWTDGYRFTGVAIT. An ABC transmembrane type-1 domain is found at 23–221; sequence VAITLWLLIS…LISYVLISLF (199 aa). A helical transmembrane segment spans residues 27–47; the sequence is LWLLISSVVMGGLLAVILAVG. At 48 to 58 the chain is on the cytoplasmic side; that stretch reads RVSSNKFIRFP. The helical transmembrane segment at 59–79 threads the bilayer; the sequence is IWLFTYIFRGTPLYVQLLVFY. Residues 80-104 are Periplasmic-facing; it reads SGMYTLEIVKGTDLLNAFFRSGLNC. The chain crosses the membrane as a helical span at residues 105–125; that stretch reads TVLALTLNTCAYTTEIFAGAI. Residues 126 to 157 are Cytoplasmic-facing; it reads RSVPHGEIEAARAYGFSSFKMYRCIILPSALR. Residues 158–178 traverse the membrane as a helical segment; it reads IALPAYSNEVILMLHSTALAF. The Periplasmic portion of the chain corresponds to 179 to 199; the sequence is TATVPDLLKIARDINSATYQP. The helical transmembrane segment at 200–220 threads the bilayer; the sequence is FTAFGIAAVLYLLISYVLISL. Topologically, residues 221–235 are cytoplasmic; sequence FRRAERRWLQHVSSK.

It belongs to the binding-protein-dependent transport system permease family. HisMQ subfamily. The HisPMQJ complex is composed of two ATP-binding proteins (HisP), two transmembrane proteins (HisM and HisQ) and a solute-binding protein (HisJ). The HisPMQ-ArgT complex is composed of two ATP-binding proteins (HisP), two transmembrane proteins (HisM and HisQ) and a solute-binding protein (ArgT).

It is found in the cell inner membrane. Functionally, part of the ABC transporter complex HisPMQJ involved in histidine transport. Is also part of the ABC transporter complex HisPMQ-ArgT involved in lysine/arginine/ornithine transport. Probably responsible for the translocation of the substrate across the membrane. The polypeptide is Histidine/lysine/arginine/ornithine transport system permease protein HisM (hisM) (Salmonella typhi).